The primary structure comprises 213 residues: Kynurenine formamidase (213 aa).

Trp-18 contributes to the substrate binding site. Positions 48, 52, and 54 each coordinate Zn(2+). His-58 (proton donor/acceptor) is an active-site residue. Zn(2+) contacts are provided by His-160 and Glu-172.

Belongs to the Cyclase 1 superfamily. KynB family. In terms of assembly, homodimer. Requires Zn(2+) as cofactor.

It carries out the reaction N-formyl-L-kynurenine + H2O = L-kynurenine + formate + H(+). It functions in the pathway amino-acid degradation; L-tryptophan degradation via kynurenine pathway; L-kynurenine from L-tryptophan: step 2/2. Functionally, catalyzes the hydrolysis of N-formyl-L-kynurenine to L-kynurenine, the second step in the kynurenine pathway of tryptophan degradation. This chain is Kynurenine formamidase, found in Burkholderia cenocepacia (strain ATCC BAA-245 / DSM 16553 / LMG 16656 / NCTC 13227 / J2315 / CF5610) (Burkholderia cepacia (strain J2315)).